We begin with the raw amino-acid sequence, 360 residues long: E3 ubiquitin-protein ligase RNF146 (360 aa).

The RING-type zinc-finger motif lies at 37-75; that stretch reads CAICLQTCVHPVSLPCKHVFCYLCVKGASWLGKRCALCR. Residues lysine 85 and lysine 95 each participate in a glycyl lysine isopeptide (Lys-Gly) (interchain with G-Cter in ubiquitin) cross-link. Residues 92-168 enclose the WWE domain; sequence EELKAASRGN…EHGRRRKIKR (77 aa). Tyrosine 108, arginine 111, and tryptophan 115 together coordinate a glycoprotein. Lysine 131 participates in a covalent cross-link: Glycyl lysine isopeptide (Lys-Gly) (interchain with G-Cter in ubiquitin). Positions 145, 154, 164, and 176 each coordinate a glycoprotein. Lysine 176 is covalently cross-linked (Glycyl lysine isopeptide (Lys-Gly) (interchain with G-Cter in ubiquitin)). The segment at 259-360 is disordered; the sequence is ERSHRGEGEE…PDGQCTVTEV (102 aa). Residues 284–294 show a composition bias toward acidic residues; it reads SIEETESDASS. Phosphoserine occurs at positions 290 and 294. Low complexity predominate over residues 295–305; that stretch reads DSENVSSAVVA. A compositionally biased stretch (polar residues) spans 307–333; sequence HSLTQQRLLVSNANQTVSDRSDQSGTD.

Can form homooligomers. Interacts with PARsylated AXIN1, AXIN2, BLZF1, CASC3, H1-2, IPO7, LIG3, NCL, PARP1, XRCC1, XRCC5 and XRCC6. Interacts with DDB1, DHX15, IQGAP1, LRPPRC, PARP2, PRKDC, RUVBL2, TNKS1 and TNKS2. Binding often leads to interactor ubiquitination, in the presence of the appropriate E1 and E2 enzymes, and proteasomal degradation. In terms of processing, ubiquitinated; autoubiquitinated. Autoubiquitination is enhanced upon poly(ADP-ribose)-binding.

It localises to the cytoplasm. The protein localises to the cytosol. Its subcellular location is the nucleus. The catalysed reaction is S-ubiquitinyl-[E2 ubiquitin-conjugating enzyme]-L-cysteine + [acceptor protein]-L-lysine = [E2 ubiquitin-conjugating enzyme]-L-cysteine + N(6)-ubiquitinyl-[acceptor protein]-L-lysine.. The protein operates within protein modification; protein ubiquitination. In terms of biological role, E3 ubiquitin-protein ligase that specifically binds poly-ADP-ribosylated (PARsylated) proteins and mediates their ubiquitination and subsequent degradation. May regulate many important biological processes, such as cell survival and DNA damage response. Acts as an activator of the Wnt signaling pathway by mediating the ubiquitination of PARsylated AXIN1 and AXIN2, 2 key components of the beta-catenin destruction complex. Acts in cooperation with tankyrase proteins (TNKS and TNKS2), which mediate PARsylation of target proteins AXIN1, AXIN2, BLZF1, CASC3, TNKS and TNKS2. Recognizes and binds tankyrase-dependent PARsylated proteins via its WWE domain and mediates their ubiquitination, leading to their degradation. Different ubiquitin linkage types have been observed: TNKS2 undergoes ubiquitination at 'Lys-48' and 'Lys-63', while AXIN1 is only ubiquitinated at 'Lys-48'. May regulate TNKS and TNKS2 subcellular location, preventing aggregation at a centrosomal location. Neuroprotective protein. Protects the brain against N-methyl-D-aspartate (NMDA) receptor-mediated glutamate excitotoxicity and ischemia, by interfering with PAR-induced cell death, called parthanatos. Prevents nuclear translocation of AIFM1 in a PAR-binding dependent manner. Does not affect PARP1 activation. Protects against cell death induced by DNA damaging agents, such as N-methyl-N-nitro-N-nitrosoguanidine (MNNG) and rescues cells from G1 arrest. Promotes cell survival after gamma-irradiation. Facilitates DNA repair. The chain is E3 ubiquitin-protein ligase RNF146 (RNF146) from Macaca fascicularis (Crab-eating macaque).